The sequence spans 357 residues: Heat-inducible transcription repressor HrcA (357 aa).

Belongs to the HrcA family.

Negative regulator of class I heat shock genes (grpE-dnaK-dnaJ and groELS operons). Prevents heat-shock induction of these operons. The chain is Heat-inducible transcription repressor HrcA from Chlorobium phaeovibrioides (strain DSM 265 / 1930) (Prosthecochloris vibrioformis (strain DSM 265)).